The following is a 95-amino-acid chain: Small ribosomal subunit protein uS19 (95 aa).

Residues 76-95 form a disordered region; sequence PTRRFGGHADKKAATKGQVR.

The protein belongs to the universal ribosomal protein uS19 family.

In terms of biological role, protein S19 forms a complex with S13 that binds strongly to the 16S ribosomal RNA. The polypeptide is Small ribosomal subunit protein uS19 (Pseudothermotoga lettingae (strain ATCC BAA-301 / DSM 14385 / NBRC 107922 / TMO) (Thermotoga lettingae)).